Here is a 78-residue protein sequence, read N- to C-terminus: Large ribosomal subunit protein bL28 (78 aa).

A disordered region spans residues 1–22; sequence MSRVCQVTGKRPMSGNNRSHAM.

It belongs to the bacterial ribosomal protein bL28 family.

This Yersinia pseudotuberculosis serotype O:1b (strain IP 31758) protein is Large ribosomal subunit protein bL28.